A 974-amino-acid chain; its full sequence is Valine--tRNA ligase, chloroplastic/mitochondrial 2 (974 aa).

Residues 109–119 (PNVTGSLHMGH) carry the 'HIGH' region motif. The LRR 1 repeat unit spans residues 432-454 (LAEKALLAVENKELTIIPERFEK). The stretch at 489–518 (EEDYIVAKSAEEALEKALEKYGKDVEIYQD) forms a coiled coil. Positions 598–602 (KMSKS) match the 'KMSKS' region motif. Residue Lys-601 coordinates ATP. The stretch at 857–880 (LALLSRLDLNNVHFSNAPPGDANL) is one LRR 2 repeat.

The protein belongs to the class-I aminoacyl-tRNA synthetase family.

The protein localises to the plastid. It is found in the chloroplast. The protein resides in the mitochondrion. The catalysed reaction is tRNA(Val) + L-valine + ATP = L-valyl-tRNA(Val) + AMP + diphosphate. This Arabidopsis thaliana (Mouse-ear cress) protein is Valine--tRNA ligase, chloroplastic/mitochondrial 2.